Consider the following 53-residue polypeptide: UPF0391 membrane protein ECA0470 (53 aa).

2 helical membrane passes run 4–24 and 30–47; these read WGIIFLVIALIAAALGFGGLA and AAKIVFVVGIILFLVSLF.

This sequence belongs to the UPF0391 family.

Its subcellular location is the cell membrane. The sequence is that of UPF0391 membrane protein ECA0470 from Pectobacterium atrosepticum (strain SCRI 1043 / ATCC BAA-672) (Erwinia carotovora subsp. atroseptica).